The sequence spans 74 residues: Chitinases 70, 30, and 20.5 kDa (74 aa).

Residues 1 to 27 (XTSATATYAKTQDWGSCFEGKWTIKNT) are N-terminus of 70 kDa chitinase. The segment at 28–52 (AACSSYPSWVAGRSYAAGDIVYYTD) is N-terminus of 30 kDa chitinase. The tract at residues 53-74 (XGYTDLPVSRQKMCQNGMVTNC) is N-terminus of 20.5 kDa chitinase.

The protein belongs to the glycosyl hydrolase 18 family. Chitinase class II subfamily. In terms of assembly, homodimer, but homotrimers and homotetramers could be observed for the 20.5 and 30 kDa chitinases. The 70 kDa chitinase is probably the precursor protein of the 30 and 20.5 kDa chitinases.

It catalyses the reaction Random endo-hydrolysis of N-acetyl-beta-D-glucosaminide (1-&gt;4)-beta-linkages in chitin and chitodextrins.. Functionally, able to cleave chitin oligomers from N=3 to 6. The polypeptide is Chitinases 70, 30, and 20.5 kDa (Streptomyces olivaceoviridis (Streptomyces corchorusii)).